Consider the following 882-residue polypeptide: Nitrogen regulatory protein areA (882 aa).

Positions 1–13 are enriched in gly residues; that stretch reads MSGLTLGGGGSGG. Disordered stretches follow at residues 1-75, 139-191, 228-257, 325-344, 394-422, 461-545, and 579-675; these read MSGL…PDSL, KRKE…LTSD, SRKD…SEFG, NNHS…FGLD, STDF…EHSM, NQDQ…DMNG, and MDTP…GPTT. A compositionally biased stretch (low complexity) spans 48-59; the sequence is SDFSQLSDDFSF. 2 stretches are compositionally biased toward polar residues: residues 156-169 and 177-191; these read NSVS…QLTS and PTRQ…LTSD. Over residues 325-334 the composition is skewed to basic residues; that stretch reads NNHSSSHHNH. 2 stretches are compositionally biased toward polar residues: residues 394–413 and 492–503; these read STDF…STPQ and QVLNPNDFSTGA. The segment covering 604-613 has biased composition (basic and acidic residues); that stretch reads VRNREQDPRR. Over residues 617 to 642 the composition is skewed to polar residues; that stretch reads ARTTSTPNTAQLLRQSMNANTSHTSP. Residues 676-700 form a GATA-type zinc finger; sequence CTNCFTQTTPLWRRNPEGQPLCNAC. The tract at residues 723–871 is disordered; sequence RNRSSANSLA…NHSIAGGQGA (149 aa). The segment covering 745 to 759 has biased composition (low complexity); that stretch reads KNSVQQTTVTTPTSS. A compositionally biased stretch (polar residues) spans 795–811; that stretch reads NPTTSSPGQSRGTSSVQ. Residues 848–861 are compositionally biased toward low complexity; that stretch reads ALAPAMPPAAANPA.

It is found in the nucleus. In terms of biological role, major nitrogen regulatory protein. Positively acting regulatory gene of nitrogen metabolite repression. This Aspergillus niger protein is Nitrogen regulatory protein areA (areA).